The sequence spans 983 residues: ABC transporter A family member 2 (983 aa).

Helical transmembrane passes span 33–53, 221–241, 279–299, 305–325, 339–359, and 416–436; these read FLQL…QAAM, IVAL…FGFV, ILTA…QFDF, FPVV…LAFM, VGFF…SGFP, and VLTI…WFVL. Residues 518–763 form the ABC transporter domain; sequence VQIRGLAKTY…FGTGFIANIS (246 aa). 564-571 provides a ligand contact to ATP; that stretch reads GPNGAGKT. Positions 963 to 983 are disordered; sequence RSGSTSSRRFSRSGSSRRFSS.

The protein belongs to the ABC transporter superfamily. ABCA family. CPR flippase (TC 3.A.1.211) subfamily.

It localises to the membrane. The protein is ABC transporter A family member 2 (ABCA2) of Arabidopsis thaliana (Mouse-ear cress).